The following is a 175-amino-acid chain: Large ribosomal subunit protein uL18 (175 aa).

This sequence belongs to the universal ribosomal protein uL18 family. As to quaternary structure, part of the 50S ribosomal subunit. Contacts the 5S and 23S rRNAs.

This is one of the proteins that bind and probably mediate the attachment of the 5S RNA into the large ribosomal subunit, where it forms part of the central protuberance. The protein is Large ribosomal subunit protein uL18 of Methanosphaerula palustris (strain ATCC BAA-1556 / DSM 19958 / E1-9c).